Consider the following 95-residue polypeptide: MALERSDVEKIAHLASIKLNEGDLPHITSALNSILGLVDEMQAVDTDGIEPLAHPLEASQRLRADVVTESNHREAYQSIAPAVESGLYLVPKVID.

Belongs to the GatC family. As to quaternary structure, heterotrimer of A, B and C subunits.

It catalyses the reaction L-glutamyl-tRNA(Gln) + L-glutamine + ATP + H2O = L-glutaminyl-tRNA(Gln) + L-glutamate + ADP + phosphate + H(+). The catalysed reaction is L-aspartyl-tRNA(Asn) + L-glutamine + ATP + H2O = L-asparaginyl-tRNA(Asn) + L-glutamate + ADP + phosphate + 2 H(+). Its function is as follows. Allows the formation of correctly charged Asn-tRNA(Asn) or Gln-tRNA(Gln) through the transamidation of misacylated Asp-tRNA(Asn) or Glu-tRNA(Gln) in organisms which lack either or both of asparaginyl-tRNA or glutaminyl-tRNA synthetases. The reaction takes place in the presence of glutamine and ATP through an activated phospho-Asp-tRNA(Asn) or phospho-Glu-tRNA(Gln). This Pseudomonas fluorescens (strain ATCC BAA-477 / NRRL B-23932 / Pf-5) protein is Aspartyl/glutamyl-tRNA(Asn/Gln) amidotransferase subunit C.